A 289-amino-acid chain; its full sequence is Heme oxygenase 1 (289 aa).

Polar residues predominate over residues 1 to 12; sequence MERPQPDSSMPQ. Positions 1-24 are disordered; that stretch reads MERPQPDSSMPQDLSEALKEATKE. Residues 1–266 lie on the Cytoplasmic side of the membrane; that stretch reads MERPQPDSSM…KPQPSVLSQA (266 aa). 4 residues coordinate heme b: lysine 19, histidine 26, tyrosine 135, and arginine 184. The disordered stretch occupies residues 239 to 261; the sequence is RRAGSKVQDLAPTKASRGKPQPS. Serine 243 bears the Phosphoserine mark. The chain crosses the membrane as a helical; Anchor for type IV membrane protein span at residues 267-289; that stretch reads PLLRWVLTLSFLVATVAVGLYAM.

Belongs to the heme oxygenase family. In terms of assembly, homodimer and higher order homooligomer. Oligomerization is crucial for its stability and function in the endoplasmic reticulum. Interacts with FLVCR2; this interaction is potentiated in the presence of heme. A soluble form arises by proteolytic removal of the membrane anchor.

Its subcellular location is the endoplasmic reticulum membrane. It catalyses the reaction heme b + 3 reduced [NADPH--hemoprotein reductase] + 3 O2 = biliverdin IXalpha + CO + Fe(2+) + 3 oxidized [NADPH--hemoprotein reductase] + 3 H2O + H(+). Its activity is regulated as follows. Inhibited by metalloporphyrins such as Sn-, Co-, Mn- and Zn-protoporphyrins. Functionally, catalyzes the oxidative cleavage of heme at the alpha-methene bridge carbon, released as carbon monoxide (CO), to generate biliverdin IXalpha, while releasing the central heme iron chelate as ferrous iron. Affords protection against programmed cell death and this cytoprotective effect relies on its ability to catabolize free heme and prevent it from sensitizing cells to undergo apoptosis. Its function is as follows. Catalyzes the oxidative cleavage of heme at the alpha-methene bridge carbon, released as carbon monoxide (CO), to generate biliverdin IXalpha, while releasing the central heme iron chelate as ferrous iron. The chain is Heme oxygenase 1 (HMOX1) from Bos taurus (Bovine).